Reading from the N-terminus, the 345-residue chain is S-adenosylmethionine:tRNA ribosyltransferase-isomerase (345 aa).

This sequence belongs to the QueA family. As to quaternary structure, monomer.

The protein resides in the cytoplasm. The catalysed reaction is 7-aminomethyl-7-carbaguanosine(34) in tRNA + S-adenosyl-L-methionine = epoxyqueuosine(34) in tRNA + adenine + L-methionine + 2 H(+). It functions in the pathway tRNA modification; tRNA-queuosine biosynthesis. Transfers and isomerizes the ribose moiety from AdoMet to the 7-aminomethyl group of 7-deazaguanine (preQ1-tRNA) to give epoxyqueuosine (oQ-tRNA). This is S-adenosylmethionine:tRNA ribosyltransferase-isomerase from Alkalilimnicola ehrlichii (strain ATCC BAA-1101 / DSM 17681 / MLHE-1).